The primary structure comprises 293 residues: Ubiquinone biosynthesis protein COQ9-B, mitochondrial (293 aa).

Positions 21 to 73 are disordered; the sequence is LRSDDQKQPPFSSSSTHAETPEHAEEQYQQQQSPPRYTDQAGEESEDYESEEQ. A compositionally biased stretch (polar residues) spans 29–38; sequence PPFSSSSTHA. Acidic residues predominate over residues 61 to 72; the sequence is AGEESEDYESEE. Residue arginine 219 participates in a 1,2-diacylglycero-3-phosphoethanolamine binding.

Belongs to the COQ9 family. In terms of assembly, homodimer. Heterodimer; two heterodimers of COQ7:COQ9 come together on the same side of the lipid pseudo-bilayer and form a curved tetramer with a hydrophobic surface suitable for membrane interaction. These two tetramers assemble into a soluble octamer with a pseudo-bilayer of lipids captured within. Interacts with COQ7; this interaction allows ubiquinone (CoQ) isoprene intermediates presentation to COQ7 and facilitates the COQ7-mediated hydroxylase step.

It is found in the mitochondrion. It functions in the pathway cofactor biosynthesis; ubiquinone biosynthesis. Its function is as follows. Membrane-associated protein that warps the membrane surface to access and bind aromatic isoprenes with high specificity, including ubiquinone (CoQ) isoprene intermediates and presents them directly to COQ7, therefore facilitating the COQ7-mediated hydroxylase step. Participates in the biosynthesis of coenzyme Q, also named ubiquinone, an essential lipid-soluble electron transporter for aerobic cellular respiration. The polypeptide is Ubiquinone biosynthesis protein COQ9-B, mitochondrial (coq9-b) (Xenopus laevis (African clawed frog)).